Reading from the N-terminus, the 626-residue chain is ATP-dependent zinc metalloprotease FtsH (626 aa).

The Cytoplasmic portion of the chain corresponds to 1 to 7; that stretch reads MNGNRPN. Residues 8-28 form a helical membrane-spanning segment; it reads YISLIFAALVILSLFWLVRSF. The Periplasmic portion of the chain corresponds to 29–108; sequence YFDTSAPSKM…VTGEKGVSSS (80 aa). Residues 109-129 form a helical membrane-spanning segment; sequence FWVNVIGNVIFIGFLLFMFFF. Over 130 to 626 the chain is Cytoplasmic; sequence MMRTISGRNN…RAAAGSEQDS (497 aa). 202–209 is an ATP binding site; the sequence is GPPGTGKT. Histidine 424 lines the Zn(2+) pocket. Glutamate 425 is an active-site residue. Residues histidine 428 and aspartate 501 each coordinate Zn(2+).

In the central section; belongs to the AAA ATPase family. This sequence in the C-terminal section; belongs to the peptidase M41 family. As to quaternary structure, homohexamer. It depends on Zn(2+) as a cofactor.

The protein resides in the cell inner membrane. In terms of biological role, acts as a processive, ATP-dependent zinc metallopeptidase for both cytoplasmic and membrane proteins. Plays a role in the quality control of integral membrane proteins. The chain is ATP-dependent zinc metalloprotease FtsH from Pseudothermotoga lettingae (strain ATCC BAA-301 / DSM 14385 / NBRC 107922 / TMO) (Thermotoga lettingae).